Here is a 466-residue protein sequence, read N- to C-terminus: Protein tilB homolog (466 aa).

LRR repeat units follow at residues 22–43, 45–66, 67–88, and 89–110; these read SLEELSLHQQEIERLEHIDKWC, DLKILYLQNNLIGKIENVSKLK, KLEYLNLALNNIEKIENLEGCE, and ELAKLDLTVNFIGELSSIKTLK. An LRRCT domain is found at 123–161; it reads NPCAFFDHYREFVVATLPQLKWLDGKGIEPSERIKALQE. Residues 178-204 adopt a coiled-coil conformation; sequence LKRAKLKEEAQRKHQEEDKNEDKRSNA. Basic and acidic residues-rich tracts occupy residues 185-202 and 269-279; these read EEAQRKHQEEDKNEDKRS and EKQRKNQEKLS. Disordered regions lie at residues 185-206 and 269-288; these read EEAQRKHQEEDKNEDKRSNAGF and EKQRKNQEKLSERKKKVKPP. Residues 301–396 form the CS domain; sequence VNEPKIDFSL…GGQRAFTSVK (96 aa). The tract at residues 418 to 466 is disordered; the sequence is VDPSKHSFPDVTNIVQGKKHTPRRRPEPKIIPSEEDPTFEDNPEVPPLI. Residues 450-460 show a composition bias toward acidic residues; that stretch reads SEEDPTFEDNP.

The protein belongs to the tilB family. Interacts (via CS domain) with ZMYND10 (via C-terminus).

The protein resides in the cytoplasm. Its subcellular location is the cell projection. It localises to the cilium. Its function is as follows. May play a role in dynein arm assembly, hence essential for proper axoneme building for cilia motility. The sequence is that of Protein tilB homolog (LRCC6) from Macaca fascicularis (Crab-eating macaque).